Here is a 349-residue protein sequence, read N- to C-terminus: Protein-glutamate methylesterase/protein-glutamine glutaminase (349 aa).

Positions 5–122 constitute a Response regulatory domain; the sequence is RVLSVDDSAL…REGMLAYSEM (118 aa). Residue Asp56 is modified to 4-aspartylphosphate. A CheB-type methylesterase domain is found at 152-344; it reads LLSSEKLIAI…QQMLATISAG (193 aa). Residues Ser164, His190, and Asp286 contribute to the active site.

This sequence belongs to the CheB family. Post-translationally, phosphorylated by CheA. Phosphorylation of the N-terminal regulatory domain activates the methylesterase activity.

It localises to the cytoplasm. It catalyses the reaction [protein]-L-glutamate 5-O-methyl ester + H2O = L-glutamyl-[protein] + methanol + H(+). The catalysed reaction is L-glutaminyl-[protein] + H2O = L-glutamyl-[protein] + NH4(+). Involved in chemotaxis. Part of a chemotaxis signal transduction system that modulates chemotaxis in response to various stimuli. Catalyzes the demethylation of specific methylglutamate residues introduced into the chemoreceptors (methyl-accepting chemotaxis proteins or MCP) by CheR. Also mediates the irreversible deamidation of specific glutamine residues to glutamic acid. This Shigella flexneri protein is Protein-glutamate methylesterase/protein-glutamine glutaminase.